The chain runs to 103 residues: Cell division suppressor protein YneA (103 aa).

Residues 36-87 form the LysM domain; the sequence is VKIEVQSGDTLWGLADQVNDSKSIDKNAFIDWVTQHNDLASTEIQPGDILVI.

It belongs to the YneA family.

It localises to the cytoplasm. Inhibits cell division during the SOS response. Affects a later stage of the cell division protein assembly, after the assembly of the Z ring, by probably suppressing recruitment of FtsL and/or DivIC to the division machinery. The chain is Cell division suppressor protein YneA from Bacillus pumilus (strain SAFR-032).